The sequence spans 139 residues: Small ribosomal subunit protein uS11 (139 aa).

2 disordered regions span residues 1–33 (MPPAKKGPATSARKGQKTRRREKKNVPHGAAHI) and 118–139 (GAISDVTPQPHNGVRPPKRRRV). A compositionally biased stretch (basic residues) spans 14–23 (KGQKTRRREK).

It belongs to the universal ribosomal protein uS11 family. As to quaternary structure, part of the 30S ribosomal subunit. Interacts with proteins S7 and S18. Binds to IF-3.

Located on the platform of the 30S subunit, it bridges several disparate RNA helices of the 16S rRNA. Forms part of the Shine-Dalgarno cleft in the 70S ribosome. The polypeptide is Small ribosomal subunit protein uS11 (Mycobacterium tuberculosis (strain ATCC 25177 / H37Ra)).